The following is an 840-amino-acid chain: Lon protease homolog 2, peroxisomal (840 aa).

In terms of domain architecture, Lon N-terminal spans 13–222 (LPLLCTHDGV…KALPLLTRQI (210 aa)). 375 to 382 (GPPGVGKT) serves as a coordination point for ATP. The interval 583-606 (QKVSRSEAPTEQHAEQNTDSKVED) is disordered. The span at 584-606 (KVSRSEAPTEQHAEQNTDSKVED) shows a compositional bias: basic and acidic residues. The Lon proteolytic domain occupies 641 to 825 (LTLPGVAIGL…DEVLNAAFDG (185 aa)). Catalysis depends on residues Ser731 and Lys774. A Microbody targeting signal motif is present at residues 838-840 (SKL).

It belongs to the peptidase S16 family.

It is found in the peroxisome matrix. It carries out the reaction Hydrolysis of proteins in presence of ATP.. Its function is as follows. ATP-dependent serine protease that mediates the selective degradation of misfolded and unassembled polypeptides in the peroxisomal matrix. Necessary for type 2 peroxisome targeting signal (PTS2)-containing protein processing and facilitates peroxisome matrix protein import. In Danio rerio (Zebrafish), this protein is Lon protease homolog 2, peroxisomal (lonp2).